A 284-amino-acid polypeptide reads, in one-letter code: Efem/EfeO family lipoprotein (284 aa).

The first 17 residues, methionine 1–alanine 17, serve as a signal peptide directing secretion. Residue cysteine 18 is the site of N-palmitoyl cysteine attachment. The S-diacylglycerol cysteine moiety is linked to residue cysteine 18.

This sequence belongs to the EfeM/EfeO family.

The protein localises to the cell membrane. The sequence is that of Efem/EfeO family lipoprotein from Staphylococcus aureus (strain MRSA252).